The following is a 45-amino-acid chain: MTKRTFGGTSRKRKRVSGFRVRMRSHTGRRVIKSRRKRGRDRIAV.

Residues 1-45 (MTKRTFGGTSRKRKRVSGFRVRMRSHTGRRVIKSRRKRGRDRIAV) are disordered. Over residues 10-45 (SRKRKRVSGFRVRMRSHTGRRVIKSRRKRGRDRIAV) the composition is skewed to basic residues.

It belongs to the bacterial ribosomal protein bL34 family.

This Prochlorococcus marinus (strain MIT 9515) protein is Large ribosomal subunit protein bL34.